The following is a 460-amino-acid chain: Cysteine--tRNA ligase (460 aa).

C29 provides a ligand contact to Zn(2+). The 'HIGH' region signature appears at 31–41 (ATPQSSPHIGH). Residues C212, H237, and E241 each coordinate Zn(2+). Positions 268–272 (KMSKS) match the 'KMSKS' region motif. K271 provides a ligand contact to ATP.

Belongs to the class-I aminoacyl-tRNA synthetase family. As to quaternary structure, monomer. The cofactor is Zn(2+).

Its subcellular location is the cytoplasm. It carries out the reaction tRNA(Cys) + L-cysteine + ATP = L-cysteinyl-tRNA(Cys) + AMP + diphosphate. In Corynebacterium glutamicum (strain R), this protein is Cysteine--tRNA ligase.